The primary structure comprises 35 residues: Dolichyl-diphosphooligosaccharide--protein glycosyltransferase subunit 4B (35 aa).

At 1–8 (MFDDQDLG) the chain is on the lumenal side. The chain crosses the membrane as a helical span at residues 9–29 (FFANFLGIFIFIMVIAYHFVV). Residues 30-35 (AEPKFE) lie on the Cytoplasmic side of the membrane.

This sequence belongs to the OST4 family. In terms of assembly, component of the oligosaccharyltransferase (OST) complex.

Its subcellular location is the endoplasmic reticulum membrane. Subunit of the oligosaccharyl transferase (OST) complex that catalyzes the initial transfer of a defined glycan (Glc(3)Man(9)GlcNAc(2) in eukaryotes) from the lipid carrier dolichol-pyrophosphate to an asparagine residue within an Asn-X-Ser/Thr consensus motif in nascent polypeptide chains, the first step in protein N-glycosylation. N-glycosylation occurs cotranslationally and the complex associates with the Sec61 complex at the channel-forming translocon complex that mediates protein translocation across the endoplasmic reticulum (ER). All subunits are required for a maximal enzyme activity. This Arabidopsis thaliana (Mouse-ear cress) protein is Dolichyl-diphosphooligosaccharide--protein glycosyltransferase subunit 4B (OST4B).